Consider the following 253-residue polypeptide: Imidazole glycerol phosphate synthase subunit HisF (253 aa).

Residues aspartate 11 and aspartate 130 contribute to the active site.

It belongs to the HisA/HisF family. As to quaternary structure, heterodimer of HisH and HisF.

The protein resides in the cytoplasm. It catalyses the reaction 5-[(5-phospho-1-deoxy-D-ribulos-1-ylimino)methylamino]-1-(5-phospho-beta-D-ribosyl)imidazole-4-carboxamide + L-glutamine = D-erythro-1-(imidazol-4-yl)glycerol 3-phosphate + 5-amino-1-(5-phospho-beta-D-ribosyl)imidazole-4-carboxamide + L-glutamate + H(+). It functions in the pathway amino-acid biosynthesis; L-histidine biosynthesis; L-histidine from 5-phospho-alpha-D-ribose 1-diphosphate: step 5/9. Functionally, IGPS catalyzes the conversion of PRFAR and glutamine to IGP, AICAR and glutamate. The HisF subunit catalyzes the cyclization activity that produces IGP and AICAR from PRFAR using the ammonia provided by the HisH subunit. The protein is Imidazole glycerol phosphate synthase subunit HisF of Myxococcus xanthus (strain DK1622).